Here is a 293-residue protein sequence, read N- to C-terminus: Lipoyl synthase (293 aa).

Cys38, Cys43, Cys49, Cys64, Cys68, Cys71, and Ser277 together coordinate [4Fe-4S] cluster. The 217-residue stretch at 50–266 folds into the Radical SAM core domain; it reads WSRGTATFLL…STIAKNAGIR (217 aa).

Belongs to the radical SAM superfamily. Lipoyl synthase family. Requires [4Fe-4S] cluster as cofactor.

It is found in the cytoplasm. The catalysed reaction is [[Fe-S] cluster scaffold protein carrying a second [4Fe-4S](2+) cluster] + N(6)-octanoyl-L-lysyl-[protein] + 2 oxidized [2Fe-2S]-[ferredoxin] + 2 S-adenosyl-L-methionine + 4 H(+) = [[Fe-S] cluster scaffold protein] + N(6)-[(R)-dihydrolipoyl]-L-lysyl-[protein] + 4 Fe(3+) + 2 hydrogen sulfide + 2 5'-deoxyadenosine + 2 L-methionine + 2 reduced [2Fe-2S]-[ferredoxin]. The protein operates within protein modification; protein lipoylation via endogenous pathway; protein N(6)-(lipoyl)lysine from octanoyl-[acyl-carrier-protein]: step 2/2. Catalyzes the radical-mediated insertion of two sulfur atoms into the C-6 and C-8 positions of the octanoyl moiety bound to the lipoyl domains of lipoate-dependent enzymes, thereby converting the octanoylated domains into lipoylated derivatives. This chain is Lipoyl synthase, found in Chlorobium chlorochromatii (strain CaD3).